The primary structure comprises 609 residues: Mitogen-activated protein kinase kinase kinase 3 (609 aa).

Residues 1-202 (MPTWWGRKSC…SAVHGSRIGG (202 aa)) are disordered. The span at 11-28 (KNKDDNHRGIISTDRDIK) shows a compositional bias: basic and acidic residues. Composition is skewed to low complexity over residues 40–64 (PTRG…GFDS) and 90–108 (VSGS…SSGS). The region spanning 214-470 (WKKGKFLGSG…ASQLLEHPFL (257 aa)) is the Protein kinase domain. Residues 220-228 (LGSGTFGQV) and K243 contribute to the ATP site. The active-site Proton acceptor is the D339. Disordered stretches follow at residues 487–511 (PRSY…SHDN) and 590–609 (MEPS…SRLV). The segment covering 594-609 (SFRTQTPNSPLRSRLV) has biased composition (polar residues).

The protein belongs to the protein kinase superfamily. STE Ser/Thr protein kinase family. MAP kinase kinase kinase subfamily. In terms of assembly, interacts with PBL27. Expressed in flower buds, roots, leaves, seedlings, stems and immature siliques. Absent of mature pollen.

The enzyme catalyses L-seryl-[protein] + ATP = O-phospho-L-seryl-[protein] + ADP + H(+). It catalyses the reaction L-threonyl-[protein] + ATP = O-phospho-L-threonyl-[protein] + ADP + H(+). This is Mitogen-activated protein kinase kinase kinase 3 from Arabidopsis thaliana (Mouse-ear cress).